A 182-amino-acid chain; its full sequence is Phospholipase A2 inhibitor gamma subunit A2 (182 aa).

8 disulfide bridges follow: Cys3–Cys27, Cys6–Cys13, Cys20–Cys48, Cys54–Cys75, Cys76–Cys81, Cys99–Cys124, Cys117–Cys146, and Cys150–Cys172. A glycan (N-linked (GlcNAc...) asparagine) is linked at Asn157.

It belongs to the CNF-like-inhibitor family. Heterodimer of subunit A and subunit B.

It is found in the secreted. Its function is as follows. Phospholipase A2 (PA2) inhibitor. Inhibits the enzymatic activity of PA2 of Deinagkistrodon acutus. Also shows a wide anti-hemorrhage activities to D.acutus, Naja atra and Agkistrodon halys venom. The native protein is more potent than the recombinant one. The polypeptide is Phospholipase A2 inhibitor gamma subunit A2 (Trimerodytes annularis (Red-bellied annulate keelback)).